We begin with the raw amino-acid sequence, 126 residues long: Fluoride-specific ion channel FluC (126 aa).

A run of 4 helical transmembrane segments spans residues 6–26 (FVAVGVGAAAGAWLRWGFAVL), 36–56 (YGTLAANLLGGYLVGLAVGFF), 69–89 (LAITGFLGGLTTFSTFSSEVV), and 99–119 (WAGLHLLLHLGGSLLLTAFGL). Na(+)-binding residues include G76 and T79.

This sequence belongs to the fluoride channel Fluc/FEX (TC 1.A.43) family.

It localises to the cell inner membrane. It carries out the reaction fluoride(in) = fluoride(out). With respect to regulation, na(+) is not transported, but it plays an essential structural role and its presence is essential for fluoride channel function. In terms of biological role, fluoride-specific ion channel. Important for reducing fluoride concentration in the cell, thus reducing its toxicity. This Cupriavidus necator (strain ATCC 17699 / DSM 428 / KCTC 22496 / NCIMB 10442 / H16 / Stanier 337) (Ralstonia eutropha) protein is Fluoride-specific ion channel FluC.